A 161-amino-acid chain; its full sequence is Non-secretory ribonuclease (161 aa).

The signal sequence occupies residues 1-27 (MVPKLFTSQICLLLLLGLLAVEGSLHV). A C-linked (Man) tryptophan glycan is attached at Trp34. The active-site Proton acceptor is His42. N-linked (GlcNAc...) asparagine glycosylation occurs at Asn44. 4 disulfides stabilise this stretch: Cys50–Cys110, Cys64–Cys123, Cys82–Cys138, and Cys89–Cys98. Tyr60 is subject to 3'-nitrotyrosine. Position 65 to 69 (65 to 69 (KNQNT)) interacts with substrate. 4 N-linked (GlcNAc...) asparagine glycosylation sites follow: Asn86, Asn92, Asn111, and Asn119. The active-site Proton donor is His156.

Belongs to the pancreatic ribonuclease family. As to quaternary structure, interacts with and forms a tight 1:1 complex with RNH1. Dimerization of two such complexes may occur.

The protein localises to the lysosome. Its subcellular location is the cytoplasmic granule. The enzyme catalyses an [RNA] containing cytidine + H2O = an [RNA]-3'-cytidine-3'-phosphate + a 5'-hydroxy-ribonucleotide-3'-[RNA].. It catalyses the reaction an [RNA] containing uridine + H2O = an [RNA]-3'-uridine-3'-phosphate + a 5'-hydroxy-ribonucleotide-3'-[RNA].. Its function is as follows. This is a non-secretory ribonuclease. It is a pyrimidine specific nuclease with a slight preference for U. Cytotoxin and helminthotoxin. Possesses a wide variety of biological activities. The polypeptide is Non-secretory ribonuclease (RNASE2) (Gorilla gorilla gorilla (Western lowland gorilla)).